A 266-amino-acid polypeptide reads, in one-letter code: Putative cysteine-rich repeat secretory protein 20 (266 aa).

A signal peptide spans 1–33 (MYFPPSSVPKRLVLVHISAVVAIKLLLIRSVSS). 2 Gnk2-homologous domains span residues 40–142 (YLQH…SIRN) and 148–261 (YNNN…LYPF).

Belongs to the cysteine-rich repeat secretory protein family.

The protein resides in the secreted. The sequence is that of Putative cysteine-rich repeat secretory protein 20 (CRRSP20) from Arabidopsis thaliana (Mouse-ear cress).